The sequence spans 101 residues: Small ribosomal subunit protein uS14 (101 aa).

This sequence belongs to the universal ribosomal protein uS14 family. As to quaternary structure, part of the 30S ribosomal subunit. Contacts proteins S3 and S10.

In terms of biological role, binds 16S rRNA, required for the assembly of 30S particles and may also be responsible for determining the conformation of the 16S rRNA at the A site. The protein is Small ribosomal subunit protein uS14 of Anaplasma phagocytophilum (strain HZ).